A 329-amino-acid polypeptide reads, in one-letter code: Glutamine synthetase (329 aa).

The 83-residue stretch at 4–86 (YKLEYIWLDA…VMCEVMMPDA (83 aa)) folds into the GS beta-grasp domain. A GS catalytic domain is found at 89-329 (PHASNTRATV…GDPYQMLLSS (241 aa)). Positions 109 and 111 each coordinate Mg(2+). Residue Glu-167 coordinates ATP. Mg(2+)-binding residues include Glu-172 and Glu-179. An L-glutamate-binding site is contributed by Glu-278.

This sequence belongs to the glutamine synthetase family. As to quaternary structure, homooctamer and homotetramer. The cofactor is Mg(2+).

It localises to the cytoplasm. The catalysed reaction is L-glutamate + NH4(+) + ATP = L-glutamine + ADP + phosphate + H(+). In terms of biological role, catalyzes the ATP-dependent biosynthesis of glutamine from glutamate and ammonia. This Rhizobium meliloti (Ensifer meliloti) protein is Glutamine synthetase.